Reading from the N-terminus, the 528-residue chain is Adhesion G-protein coupled receptor G5 (528 aa).

The first 21 residues, 1–21 (MDHCGALFLCLCLLTLQNATT), serve as a signal peptide directing secretion. Over 22-245 (ETWEELLSYM…SPALVPAELL (224 aa)) the chain is Extracellular. N-linked (GlcNAc...) asparagine glycans are attached at residues Asn-58, Asn-65, Asn-146, Asn-147, Asn-173, and Asn-179. The region spanning 78–239 (FKLSCDFSGL…AVLMQLSPAL (162 aa)) is the GAIN-B domain. Cystine bridges form between Cys-189–Cys-221 and Cys-209–Cys-223. Residues 189-239 (CVFWKEGARKQPWGGWSPEGCRTEQPSHSQVLCRCNHLTYFAVLMQLSPAL) form a GPS region. Residues 228-236 (YFAVLMQLS) are stachel. The chain crosses the membrane as a helical span at residues 246-271 (APLTYISLVGCSISIVASLITVLLHF). The Cytoplasmic segment spans residues 272-280 (HFRKQSDSL). The helical transmembrane segment at 281-304 (TRIHMNLHASVLLLNIAFLLSPAF) threads the bilayer. The Extracellular portion of the chain corresponds to 305–314 (AMSPVPGSAC). Cys-314 and Cys-404 are oxidised to a cystine. The helical transmembrane segment at 315–340 (TALAAALHYALLSCLTWMAIEGFNLY) threads the bilayer. Residues 341 to 353 (LLLGRVYNIYIRR) lie on the Cytoplasmic side of the membrane. The helical transmembrane segment at 354-377 (YVFKLGVLGWGAPALLVLLSLSVK) threads the bilayer. The Extracellular segment spans residues 378 to 410 (SSVYGPCTIPVFDSWENGTGFQNMSICWVRSPV). N-linked (GlcNAc...) asparagine glycans are attached at residues Asn-394 and Asn-400. The chain crosses the membrane as a helical span at residues 411–435 (VHSVLVMGYGGLTSLFNLVVLAWAL). At 436 to 455 (WTLRRLRERADAPSVRACHD) the chain is on the cytoplasmic side. The helical transmembrane segment at 456 to 477 (TVTVLGLTVLLGTTWALAFFSF) threads the bilayer. The Extracellular segment spans residues 478-481 (GVFL). A helical membrane pass occupies residues 482–505 (LPQLFLFTILNSLYGFFLFLWFCS). Residues 506–528 (QRCRSEAEAKAQIEAFSSSQTTQ) are Cytoplasmic-facing.

It belongs to the G-protein coupled receptor 2 family. Adhesion G-protein coupled receptor (ADGR) subfamily. As to quaternary structure, heterodimer of 2 chains generated by proteolytic processing; the large extracellular N-terminal fragment and the membrane-bound C-terminal fragment predominantly remain associated and non-covalently linked. Autoproteolytically processed at the GPS region of the GAIN-B domain; this cleavage modulates receptor activity. In terms of processing, N-glycsylated. As to expression, expressed in immune cells. Primarily found in granulocytes. Found in eosinophils.

Its subcellular location is the cell membrane. With respect to regulation, forms a heterodimer of 2 chains generated by proteolytic processing that remain associated through non-covalent interactions mediated by the GAIN-B domain. In the inactivated receptor, the Stachel sequence (also named stalk) is embedded in the GAIN-B domain, where it adopts a beta-strand conformation. On activation, the Stachel moves into the 7 transmembrane region and adopts a twisted hook-shaped configuration that forms contacts within the receptor, leading to coupling of a G-alpha protein, which activates signaling. The cleaved GAIN-B and N-terminal domains can then dissociate from the rest of the receptor. Functionally, orphan adhesion G-protein coupled receptor (aGPCR). Ligand binding causes a conformation change that triggers signaling via guanine nucleotide-binding proteins (G proteins) and modulates the activity of downstream effectors, such as adenylate cyclase. ADGRG5 is specifically coupled to G(s) G proteins and mediates activation of adenylate cyclase activity. The chain is Adhesion G-protein coupled receptor G5 from Homo sapiens (Human).